The primary structure comprises 74 residues: Translation initiation factor IF-1 (74 aa).

The S1-like domain occupies 1-73; sequence MSNKEDIIKM…TKGRIVYRKK (73 aa).

It belongs to the IF-1 family. Component of the 30S ribosomal translation pre-initiation complex which assembles on the 30S ribosome in the order IF-2 and IF-3, IF-1 and N-formylmethionyl-tRNA(fMet); mRNA recruitment can occur at any time during PIC assembly.

The protein localises to the cytoplasm. Its function is as follows. One of the essential components for the initiation of protein synthesis. Stabilizes the binding of IF-2 and IF-3 on the 30S subunit to which N-formylmethionyl-tRNA(fMet) subsequently binds. Helps modulate mRNA selection, yielding the 30S pre-initiation complex (PIC). Upon addition of the 50S ribosomal subunit IF-1, IF-2 and IF-3 are released leaving the mature 70S translation initiation complex. The polypeptide is Translation initiation factor IF-1 (Thermosipho melanesiensis (strain DSM 12029 / CIP 104789 / BI429)).